Here is an 843-residue protein sequence, read N- to C-terminus: Eisosome protein 1 (843 aa).

Ser-2 bears the N-acetylserine mark. Residue Ser-2 is modified to Phosphoserine. The segment at 13–44 (HNIGKTSGGGSRTSSITSSKKSLKHGSKSLRK) is disordered. Over residues 33-44 (KSLKHGSKSLRK) the composition is skewed to basic residues. Phosphoserine is present on residues Ser-88 and Ser-130. Positions 120–174 (KMGPKVVRNNSITSATSKTSKESQTKRKSKESPGAAASKAYSMTMETTSLSSQTN) are disordered. 2 stretches are compositionally biased toward polar residues: residues 127-137 (RNNSITSATSK) and 163-174 (TMETTSLSSQTN). 4 positions are modified to phosphoserine: Ser-182, Ser-401, Ser-584, and Ser-710. The tract at residues 717 to 843 (DLPTQLEKIE…QDAISNQEKK (127 aa)) is disordered. Thr-720 is modified (phosphothreonine). A compositionally biased stretch (low complexity) spans 752–764 (STAAKEATETSSA). Phosphoserine is present on residues Ser-763 and Ser-775. The span at 781–797 (SGKEDANDCKSAEHSKE) shows a compositional bias: basic and acidic residues. Over residues 798–810 (ISVSQKAGNNKSL) the composition is skewed to polar residues. Residues Ser-816, Ser-828, Ser-829, and Ser-838 each carry the phosphoserine modification.

Belongs to the EIS1 family.

The protein localises to the cytoplasmic granule. Its subcellular location is the cell membrane. In terms of biological role, required for normal formation of eisosomes, large cytoplasmic protein assemblies that localize to specialized domains on plasma membrane and mark the site of endocytosis. The protein is Eisosome protein 1 (EIS1) of Saccharomyces cerevisiae (strain RM11-1a) (Baker's yeast).